Consider the following 541-residue polypeptide: Major facilitator-type transporter ecdD (541 aa).

Residues 15-35 (AWPAILISGFVAFGGILFGYD) traverse the membrane as a helical segment. N-linked (GlcNAc...) asparagine glycosylation is present at Asn64. Helical transmembrane passes span 72-92 (AIVSILSAGTFFGALGASPMG), 106-126 (GIFVLGVVLQTIATSIPPFLA), 129-149 (FFAGLGVGLISALVPLYQSET), and 156-176 (GFIVGAYQFAITVGLLLASVL). 2 N-linked (GlcNAc...) asparagine glycosylation sites follow: Asn178 and Asn184. Residues 191–211 (IPIAVQFAWSIILVGGMLILP) traverse the membrane as a helical segment. A glycan (N-linked (GlcNAc...) asparagine) is linked at Asn253. Helical transmembrane passes span 277-297 (LVTGCLLQALQQLSGINFIMY), 313-333 (VITLITNCVNVGSTLPGLYAI), 340-360 (PVLLTGAIGMAVSQLLVAVLG), 384-404 (IAFICLYIFFFAASWGPSAWV), 418-440 (SLSMTTATNWLLNWALSFSTPYL), and 454-474 (IFFIWFGCCFLCIGFVHFMIY).

This sequence belongs to the major facilitator superfamily. Sugar transporter (TC 2.A.1.1) family.

The protein localises to the membrane. The protein is Major facilitator-type transporter ecdD of Aspergillus rugulosus (Emericella rugulosa).